The sequence spans 369 residues: Aminomethyltransferase (369 aa).

The protein belongs to the GcvT family. The glycine cleavage system is composed of four proteins: P, T, L and H.

The catalysed reaction is N(6)-[(R)-S(8)-aminomethyldihydrolipoyl]-L-lysyl-[protein] + (6S)-5,6,7,8-tetrahydrofolate = N(6)-[(R)-dihydrolipoyl]-L-lysyl-[protein] + (6R)-5,10-methylene-5,6,7,8-tetrahydrofolate + NH4(+). Functionally, the glycine cleavage system catalyzes the degradation of glycine. The protein is Aminomethyltransferase of Alkaliphilus metalliredigens (strain QYMF).